A 50-amino-acid polypeptide reads, in one-letter code: Large ribosomal subunit protein bL32c (50 aa).

The protein belongs to the bacterial ribosomal protein bL32 family.

The protein localises to the plastid. The protein resides in the chloroplast. In Lotus japonicus (Lotus corniculatus var. japonicus), this protein is Large ribosomal subunit protein bL32c.